We begin with the raw amino-acid sequence, 81 residues long: Large ribosomal subunit protein uL29c (81 aa).

Belongs to the universal ribosomal protein uL29 family.

It is found in the plastid. The protein localises to the chloroplast. In Phaeodactylum tricornutum (strain CCAP 1055/1), this protein is Large ribosomal subunit protein uL29c.